The chain runs to 878 residues: Valine--tRNA ligase (878 aa).

Residues 43–53 (PYPTGRLHLGH) carry the 'HIGH' region motif. The 'KMSKS' region motif lies at 527 to 531 (KMSKS). Residue K530 coordinates ATP.

Belongs to the class-I aminoacyl-tRNA synthetase family. ValS type 2 subfamily.

It localises to the cytoplasm. It carries out the reaction tRNA(Val) + L-valine + ATP = L-valyl-tRNA(Val) + AMP + diphosphate. In terms of biological role, catalyzes the attachment of valine to tRNA(Val). As ValRS can inadvertently accommodate and process structurally similar amino acids such as threonine, to avoid such errors, it has a 'posttransfer' editing activity that hydrolyzes mischarged Thr-tRNA(Val) in a tRNA-dependent manner. The polypeptide is Valine--tRNA ligase (Methanocaldococcus jannaschii (strain ATCC 43067 / DSM 2661 / JAL-1 / JCM 10045 / NBRC 100440) (Methanococcus jannaschii)).